We begin with the raw amino-acid sequence, 369 residues long: 3,7-dimethylxanthine N-methyltransferase TCS1 (369 aa).

Position 24 (Y24) interacts with S-adenosyl-L-homocysteine. Caffeine is bound at residue T31. C66, N71, D103, L104, S138, and F139 together coordinate S-adenosyl-L-homocysteine. Residues Y156, H159, and W160 each coordinate caffeine. N177 serves as a coordination point for Mg(2+). R225 is a binding site for caffeine. 3 residues coordinate Mg(2+): D263, F265, and N266. F321 serves as a coordination point for caffeine.

Belongs to the methyltransferase superfamily. Type-7 methyltransferase family. The cofactor is Mg(2+).

It carries out the reaction 1,7-dimethylxanthine + S-adenosyl-L-methionine = caffeine + S-adenosyl-L-homocysteine + H(+). It catalyses the reaction theobromine + S-adenosyl-L-methionine = caffeine + S-adenosyl-L-homocysteine + H(+). The enzyme catalyses 7-methylxanthine + S-adenosyl-L-methionine = theobromine + S-adenosyl-L-homocysteine + H(+). Its pathway is alkaloid biosynthesis. Involved in the biosynthesis of caffeine in cv. Puer. Involved in the biosynthesis of theacrine in cv. Kucha, a caffeine-like xanthine alkaloid with diverse beneficial biological activities including anti-depressive, sedative, and hypnotic activities, improving learning and memory, increasing exercise activity, and preventing nonalcoholic fatty liver disease. Catalyzes the conversion of 7-methylxanthine (7mX) to theobromine and of theobromine to caffeine. Has 3-N- and 1-N-methylation activity. The polypeptide is 3,7-dimethylxanthine N-methyltransferase TCS1 (Camellia sinensis var. assamica (Assam tea)).